We begin with the raw amino-acid sequence, 956 residues long: Netrin receptor UNC5D (956 aa).

An N-terminal signal peptide occupies residues 1-30; the sequence is MGTGAADGSRGARRWLPWLGLFFWAAGAAA. The Extracellular segment spans residues 31 to 382; it reads ARGADGSEIL…SRRGIENASD (352 aa). An Ig-like domain is found at 52-149; the sequence is PHFIEEPEDA…LGTSKSRKAS (98 aa). 9 cysteine pairs are disulfide-bonded: C73–C134, C85–C132, C178–C229, C262–C299, C266–C303, C277–C289, C318–C352, C322–C357, and C330–C342. The interval 89–91 is important for interaction with FLRT2; it reads WVH. N115 and N226 each carry an N-linked (GlcNAc...) asparagine glycan. The 92-residue stretch at 151 to 242 folds into the Ig-like C2-type domain; it reads RIAYLRKNFE…NIVAKRRSLS (92 aa). TSP type-1 domains lie at 250 to 304 and 306 to 358; these read NGGW…ALCP and DGSW…GLCI. 2 N-linked (GlcNAc...) asparagine glycosylation sites follow: N351 and N379. The helical transmembrane segment at 383–403 threads the bilayer; sequence IALYSGLGAAVVAVAVLVIGV. Residues 404–956 lie on the Cytoplasmic side of the membrane; it reads TLYRRSHSDY…DFNYSRQNGL (553 aa). Positions 545–685 constitute a ZU5 domain; sequence LRTTGVFGHL…FGTYALTGEP (141 aa). In terms of domain architecture, Death spans 862-939; the sequence is QRICATFDTP…RTHTKLSNIT (78 aa).

The protein belongs to the unc-5 family. Interacts (via extracellular domain) with FLRT2 and FLRT3 (via extracellular domain); the interaction is direct. Has higher affinity for FLRT2. Identified in a complex with FLRT3 and ADGRL3; does not interact with ADGRL3 by itself. Proteolytically cleaved by caspases during apoptosis. The cleavage does not take place when the receptor is associated with netrin ligand. Its cleavage by caspases is required to induce apoptosis. In terms of tissue distribution, detected in multipolar cells in the brain subventricular zone (at protein level). Detected in embryonic brain neocortex, especially in the subventricular zone. Detected in multipolar cells in the brain subventricular zone. Detected in brain neocortex from young pups, especially in the somatosensory cortex. Expressed in developing limb and mammary gland.

Its subcellular location is the cell membrane. In terms of biological role, receptor for the netrin NTN4 that promotes neuronal cell survival. Plays a role in cell-cell adhesion and cell guidance. Receptor for netrin involved in cell migration. Plays a role in the regulation of neuronal cell migration in the developing brain via its interaction with FLRT2. Plays a role in axon guidance by mediating axon repulsion of neuronal growth cones in the developing nervous system upon ligand binding. May play a role in apoptosis in response to DNA damage. It also acts as a dependence receptor required for apoptosis induction when not associated with netrin ligand. Mediates cell-cell adhesion via its interaction with FLRT3 on an adjacent cell. The polypeptide is Netrin receptor UNC5D (Unc5d) (Mus musculus (Mouse)).